The chain runs to 381 residues: Palmitoyltransferase SWF1 (381 aa).

Residues 1-4 (MWLK) lie on the Lumenal side of the membrane. The helical transmembrane segment at 5-25 (IYLLSILAISVFTFVFLFGAL) threads the bilayer. Residues 26 to 64 (PQFEDTAVWKFRKWLSNRPAAIRSWDSKYCGGRLSVVGD) lie on the Cytoplasmic side of the membrane. Residues 65 to 85 (FCGSVVAPAAPWSVPILYCAF) traverse the membrane as a helical segment. Topologically, residues 86–107 (TTYMFSAYYEDLHPFIAENHWY) are lumenal. A helical transmembrane segment spans residues 108–128 (YAWLAPVAYTILVVSFVLATF). Residues 129 to 201 (SDPGKITKQN…NTVGLYNYRW (73 aa)) are Cytoplasmic-facing. Positions 157–207 (TECSTCKFTKPARSKHDRFTNKCVAKFDHYCLWINNTVGLYNYRWFLFFLL) constitute a DHHC domain. Cys-187 serves as the catalytic S-palmitoyl cysteine intermediate. A helical membrane pass occupies residues 202 to 222 (FLFFLLGNVWTLCWGALLAGL). Residues 223 to 257 (KMIVMVAAEYKDHPKPLPSIFSQWWQVMITNENKR) are Lumenal-facing. A helical transmembrane segment spans residues 258-278 (VGIIFLLSVSTGALACAFTAM). At 279 to 381 (HFYYIYLGAT…KAVMFPNSAY (103 aa)) the chain is on the cytoplasmic side.

It belongs to the DHHC palmitoyltransferase family. SWF1 subfamily.

The protein resides in the endoplasmic reticulum membrane. The catalysed reaction is L-cysteinyl-[protein] + hexadecanoyl-CoA = S-hexadecanoyl-L-cysteinyl-[protein] + CoA. Functionally, palmitoyltransferase that targets several endosomal SNAREs. Palmitoylates the SNAREs at cysteine residues close to the cytoplasmic end of their transmembrane domain. May have a role in the cellular quality control of transmembrane domain-containing proteins. The sequence is that of Palmitoyltransferase SWF1 (SWF1) from Yarrowia lipolytica (strain CLIB 122 / E 150) (Yeast).